A 145-amino-acid polypeptide reads, in one-letter code: LIM domain only protein 3 (145 aa).

LIM zinc-binding domains are found at residues 11 to 73 (KGCA…LFGV) and 75 to 137 (GNCA…GLMK).

The sequence is that of LIM domain only protein 3 (LMO3) from Bos taurus (Bovine).